We begin with the raw amino-acid sequence, 107 residues long: Phosphoribosyl-ATP pyrophosphatase (107 aa).

The protein belongs to the PRA-PH family.

It is found in the cytoplasm. It carries out the reaction 1-(5-phospho-beta-D-ribosyl)-ATP + H2O = 1-(5-phospho-beta-D-ribosyl)-5'-AMP + diphosphate + H(+). Its pathway is amino-acid biosynthesis; L-histidine biosynthesis; L-histidine from 5-phospho-alpha-D-ribose 1-diphosphate: step 2/9. The chain is Phosphoribosyl-ATP pyrophosphatase from Bacillus cereus (strain G9842).